Consider the following 132-residue polypeptide: D-ribose pyranase (132 aa).

The Proton donor role is filled by histidine 20. Residues aspartate 28, histidine 98, and 120-122 (YAN) each bind substrate.

Belongs to the RbsD / FucU family. RbsD subfamily. As to quaternary structure, homodecamer.

It is found in the cytoplasm. The catalysed reaction is beta-D-ribopyranose = beta-D-ribofuranose. The protein operates within carbohydrate metabolism; D-ribose degradation; D-ribose 5-phosphate from beta-D-ribopyranose: step 1/2. Functionally, catalyzes the interconversion of beta-pyran and beta-furan forms of D-ribose. The sequence is that of D-ribose pyranase from Geobacillus thermodenitrificans (strain NG80-2).